The chain runs to 475 residues: Aspartyl/glutamyl-tRNA(Asn/Gln) amidotransferase subunit B (475 aa).

Belongs to the GatB/GatE family. GatB subfamily. In terms of assembly, heterotrimer of A, B and C subunits.

The catalysed reaction is L-glutamyl-tRNA(Gln) + L-glutamine + ATP + H2O = L-glutaminyl-tRNA(Gln) + L-glutamate + ADP + phosphate + H(+). It catalyses the reaction L-aspartyl-tRNA(Asn) + L-glutamine + ATP + H2O = L-asparaginyl-tRNA(Asn) + L-glutamate + ADP + phosphate + 2 H(+). In terms of biological role, allows the formation of correctly charged Asn-tRNA(Asn) or Gln-tRNA(Gln) through the transamidation of misacylated Asp-tRNA(Asn) or Glu-tRNA(Gln) in organisms which lack either or both of asparaginyl-tRNA or glutaminyl-tRNA synthetases. The reaction takes place in the presence of glutamine and ATP through an activated phospho-Asp-tRNA(Asn) or phospho-Glu-tRNA(Gln). The polypeptide is Aspartyl/glutamyl-tRNA(Asn/Gln) amidotransferase subunit B (Bacillus cereus (strain ATCC 10987 / NRS 248)).